Reading from the N-terminus, the 518-residue chain is Motile sperm domain-containing protein 2 (518 aa).

Over 1–496 the chain is Cytoplasmic; that stretch reads MAENHAQNKA…QVQRCIWFQQ (496 aa). A CRAL-TRIO domain is found at 82 to 239; the sequence is ESSIPRWLLE…HMGGTDPFKY (158 aa). The tract at residues 252–308 is disordered; sequence PLCENGPITSEDETSSKEDIESDGKETLETISNEEQTPLLKKINPTESTSKAEENEK. A compositionally biased stretch (basic and acidic residues) spans 265–279; sequence TSSKEDIESDGKETL. The region spanning 327–445 is the MSP domain; the sequence is LLHISPAEEL…MEHRLRCHTV (119 aa). The required for FFAT motif binding and phosphorylated FFAT motif binding stretch occupies residues 365 to 366; sequence RT. The chain crosses the membrane as a helical; Anchor for type IV membrane protein span at residues 497–518; it reads LLLSLTMLLLAFVTSFFYLLYS.

In terms of assembly, homooligomer. Interacts (via MSP domain) with STARD3NL (via FFAT motif), RMDN3 (via FFAT motif), OSBPL1A (via FFAT motif) and CERT1 (via FFAT motif). Interacts (via MSP domain) with STARD3 (via phosphorylated FFAT motif); this interaction depends on the critical phosphorylation of STARD3 on 'Ser-209'. Interacts with RB1CC1 (via phosphorylated FFAT motif), MIGA2 (via phosphorylated FFAT motif) and OSBPL1A (via FFAT motif). As to expression, highly expressed in CD14(+) monocytes, and at lower levels in neutrophils. Does not show significant expression in B-cells or T-cells.

The protein resides in the endoplasmic reticulum membrane. In terms of biological role, endoplasmic reticulum-anchored protein that mediates the formation of contact sites between the endoplasmic (ER) and endosomes, mitochondria or Golgi through interaction with conventional- and phosphorylated-FFAT-containing organelle-bound proteins. In addition, forms endoplasmic reticulum (ER)-lipid droplets (LDs) contacts through a direct protein-membrane interaction and participates in LDs homeostasis. The attachment mechanism involves an amphipathic helix that has an affinity for lipid packing defects present at the surface of LDs. Promotes migration of primary monocytes and neutrophils, in response to various chemokines. This chain is Motile sperm domain-containing protein 2, found in Homo sapiens (Human).